Reading from the N-terminus, the 574-residue chain is Isocitrate dehydrogenase kinase/phosphatase (574 aa).

ATP contacts are provided by residues 315–321 (APGIRGM) and Lys336. The active site involves Asp371.

It belongs to the AceK family.

The protein resides in the cytoplasm. It carries out the reaction L-seryl-[isocitrate dehydrogenase] + ATP = O-phospho-L-seryl-[isocitrate dehydrogenase] + ADP + H(+). Bifunctional enzyme which can phosphorylate or dephosphorylate isocitrate dehydrogenase (IDH) on a specific serine residue. This is a regulatory mechanism which enables bacteria to bypass the Krebs cycle via the glyoxylate shunt in response to the source of carbon. When bacteria are grown on glucose, IDH is fully active and unphosphorylated, but when grown on acetate or ethanol, the activity of IDH declines drastically concomitant with its phosphorylation. The chain is Isocitrate dehydrogenase kinase/phosphatase from Escherichia coli (strain SMS-3-5 / SECEC).